Reading from the N-terminus, the 187-residue chain is Elongation factor P (187 aa).

The protein belongs to the elongation factor P family.

It localises to the cytoplasm. It participates in protein biosynthesis; polypeptide chain elongation. Its function is as follows. Involved in peptide bond synthesis. Stimulates efficient translation and peptide-bond synthesis on native or reconstituted 70S ribosomes in vitro. Probably functions indirectly by altering the affinity of the ribosome for aminoacyl-tRNA, thus increasing their reactivity as acceptors for peptidyl transferase. In Zymomonas mobilis subsp. mobilis (strain ATCC 31821 / ZM4 / CP4), this protein is Elongation factor P.